Consider the following 364-residue polypeptide: D-alanine--D-alanine ligase (364 aa).

Positions Lys146–Leu352 constitute an ATP-grasp domain. Residue Thr179–Glu234 participates in ATP binding. The Mg(2+) site is built by Asp305, Glu319, and Asn321.

The protein belongs to the D-alanine--D-alanine ligase family. It depends on Mg(2+) as a cofactor. Requires Mn(2+) as cofactor.

It localises to the cytoplasm. It carries out the reaction 2 D-alanine + ATP = D-alanyl-D-alanine + ADP + phosphate + H(+). The protein operates within cell wall biogenesis; peptidoglycan biosynthesis. In terms of biological role, cell wall formation. The polypeptide is D-alanine--D-alanine ligase (Chlorobaculum tepidum (strain ATCC 49652 / DSM 12025 / NBRC 103806 / TLS) (Chlorobium tepidum)).